The primary structure comprises 442 residues: Microfibrillar-associated protein 1 (442 aa).

2 disordered regions span residues M1–G34 and E113–K203. Composition is skewed to acidic residues over residues D134–I148 and E181–M198.

Belongs to the MFAP1 family. In terms of assembly, component of the spliceosome B complex. Interacts with PRPF38A (via N-terminal interaction domain). Widely expressed.

The protein localises to the nucleus. Involved in pre-mRNA splicing as a component of the spliceosome. The polypeptide is Microfibrillar-associated protein 1 (Gallus gallus (Chicken)).